Reading from the N-terminus, the 314-residue chain is Lipid A biosynthesis acyltransferase 2 (314 aa).

Residues 17–37 (LSPVYWFTWFVLGMIAGISMF) traverse the membrane as a helical segment. An HXXXXD motif motif is present at residues 137 to 142 (HGWSVD).

This sequence belongs to the LpxL/LpxM/LpxP family. LpxM subfamily.

Its subcellular location is the cell inner membrane. The catalysed reaction is an alpha-Kdo-(2-&gt;4)-alpha-Kdo-(2-&gt;6)-(acyl)-lipid IVA + a fatty acyl-[ACP] = an alpha-Kdo-(2-&gt;4)-alpha-Kdo-(2-&gt;6)-lipid A + holo-[ACP]. Its pathway is glycolipid biosynthesis; KDO(2)-lipid A biosynthesis; KDO(2)-lipid A from CMP-3-deoxy-D-manno-octulosonate and lipid IV(A): step 4/4. The protein operates within bacterial outer membrane biogenesis; lipopolysaccharide biosynthesis. Catalyzes the transfer of an acyl chain from an acyl-[acyl-carrier-protein] (ACP) to a Kdo(2)-(acyl)-lipid IV(A) to form a Kdo(2)-lipid A. In Shigella flexneri, this protein is Lipid A biosynthesis acyltransferase 2.